Here is a 330-residue protein sequence, read N- to C-terminus: Ferredoxin--NADP reductase (330 aa).

Positions 35, 43, 48, 90, 123, 285, and 326 each coordinate FAD.

It belongs to the ferredoxin--NADP reductase type 2 family. As to quaternary structure, homodimer. FAD is required as a cofactor.

The enzyme catalyses 2 reduced [2Fe-2S]-[ferredoxin] + NADP(+) + H(+) = 2 oxidized [2Fe-2S]-[ferredoxin] + NADPH. The sequence is that of Ferredoxin--NADP reductase from Streptococcus equi subsp. zooepidemicus (strain MGCS10565).